A 394-amino-acid chain; its full sequence is Obg-like ATPase 1 (394 aa).

The OBG-type G domain maps to 25 to 282 (LKIGIVGLPN…MPPDEAAKYC (258 aa)). ATP contacts are provided by residues 34-39 (NVGKST), 56-60 (FCTID), and 94-97 (DIAG). Mg(2+) contacts are provided by Ser-38 and Thr-58. Phe-129 is a GTP binding site. ATP-binding positions include 230–231 (NM), Met-231, and 263–265 (SCA). 263–265 (SCA) contributes to the GTP binding site. One can recognise a TGS domain in the interval 303–386 (HLIYFFTAGP…QDADIIFFKF (84 aa)).

The protein belongs to the TRAFAC class OBG-HflX-like GTPase superfamily. OBG GTPase family. YchF/OLA1 subfamily. Monomer (Potential). Interacts with GAP1. Requires Mg(2+) as cofactor.

Its subcellular location is the cytoplasm. It localises to the cell membrane. It is found in the cytosol. Activated by GAP1. Hydrolyzes ATP, and can also hydrolyze GTP with lower efficiency. Has lower affinity for GTP (Potential). Exhibits GTPase activity. Exhibits similar binding affinities and hydrolytic activities toward both GTP and ATP. Binds to the 26 S ribosomal RNA in vitro, but not to the 5.8 S or 18 S rRNA. Confers sensitivity to salinity stress by suppressing the anti-oxidation enzymatic activities and increasing lipid peroxidation thus leading to the accumulation of reactive oxygen species (ROS). This chain is Obg-like ATPase 1, found in Oryza sativa subsp. indica (Rice).